Consider the following 213-residue polypeptide: ATP phosphoribosyltransferase (213 aa).

The protein belongs to the ATP phosphoribosyltransferase family. Short subfamily. Heteromultimer composed of HisG and HisZ subunits.

It localises to the cytoplasm. It catalyses the reaction 1-(5-phospho-beta-D-ribosyl)-ATP + diphosphate = 5-phospho-alpha-D-ribose 1-diphosphate + ATP. The protein operates within amino-acid biosynthesis; L-histidine biosynthesis; L-histidine from 5-phospho-alpha-D-ribose 1-diphosphate: step 1/9. In terms of biological role, catalyzes the condensation of ATP and 5-phosphoribose 1-diphosphate to form N'-(5'-phosphoribosyl)-ATP (PR-ATP). Has a crucial role in the pathway because the rate of histidine biosynthesis seems to be controlled primarily by regulation of HisG enzymatic activity. This Bacillus subtilis (strain 168) protein is ATP phosphoribosyltransferase (hisG).